A 336-amino-acid polypeptide reads, in one-letter code: Atypical chemokine receptor 1 (336 aa).

Residues 1 to 63 (MGNCLHPAEL…CNLLDDSALP (63 aa)) lie on the Extracellular side of the membrane. Asparagine 16, asparagine 27, and asparagine 33 each carry an N-linked (GlcNAc...) asparagine glycan. 2 cysteine pairs are disulfide-bonded: cysteine 51–cysteine 276 and cysteine 129–cysteine 195. A helical membrane pass occupies residues 64–84 (FFILVSVLGILASGIVLFMFF). The Cytoplasmic portion of the chain corresponds to 85 to 95 (RPLFHWQLCPG). The helical transmembrane segment at 96–116 (WPVLAQLAVGSALFSIVVPIL) threads the bilayer. Topologically, residues 117-129 (APGLGNTRSSALC) are extracellular. The chain crosses the membrane as a helical span at residues 130–153 (SLGYCVWYGSAFAQALLLGCHASL). Residues 154-166 (GPKLGADQVPGLT) are Cytoplasmic-facing. The chain crosses the membrane as a helical span at residues 167–187 (LGLSVGLWGVAALLTLPVTLA). Residues 188-207 (SGASGGLCTPVYSMELKALQ) lie on the Extracellular side of the membrane. A helical membrane pass occupies residues 208-228 (ATHAVACLAIFVLLPLGLFGA). The Cytoplasmic segment spans residues 229 to 244 (KGLKKALGMGPGPWMN). A helical transmembrane segment spans residues 245–265 (ILWAWFIFWWPHGVVLGLDFL). Over 266 to 287 (VRSKLLLLSTCLAQQALDLLLN) the chain is Extracellular. The helical transmembrane segment at 288–308 (LAEALAILHCVATPLLLALFC) threads the bilayer. Over 309 to 336 (HQATRTLLPSLPLPEGWSSHLDTLGSKS) the chain is Cytoplasmic.

The protein belongs to the G-protein coupled receptor 1 family. Atypical chemokine receptor subfamily.

The protein resides in the early endosome. It localises to the recycling endosome. Its subcellular location is the membrane. Its function is as follows. Atypical chemokine receptor that controls chemokine levels and localization via high-affinity chemokine binding that is uncoupled from classic ligand-driven signal transduction cascades, resulting instead in chemokine sequestration, degradation, or transcytosis. Also known as interceptor (internalizing receptor) or chemokine-scavenging receptor or chemokine decoy receptor. Has a promiscuous chemokine-binding profile, interacting with inflammatory chemokines of both the CXC and the CC subfamilies but not with homeostatic chemokines. Acts as a receptor for chemokines including CCL2, CCL5, CCL7, CCL11, CCL13, CCL14, CCL17, CXCL5, CXCL6, IL8/CXCL8, CXCL11, GRO, RANTES, MCP-1 and TARC. May regulate chemokine bioavailability and, consequently, leukocyte recruitment through two distinct mechanisms: when expressed in endothelial cells, it sustains the abluminal to luminal transcytosis of tissue-derived chemokines and their subsequent presentation to circulating leukocytes; when expressed in erythrocytes, serves as blood reservoir of cognate chemokines but also as a chemokine sink, buffering potential surges in plasma chemokine levels. This is Atypical chemokine receptor 1 (ACKR1) from Papio hamadryas (Hamadryas baboon).